We begin with the raw amino-acid sequence, 783 residues long: E3 UFM1-protein ligase 1 homolog (783 aa).

The disordered stretch occupies residues 406 to 476 (TLGTTHDADE…DAVQQSANSS (71 aa)). Over residues 446 to 457 (KSTKKHQRGRAA) the composition is skewed to basic residues.

Belongs to the UFL1 family.

Its function is as follows. E3 UFM1-protein ligase that mediates ufmylation of target proteins. The chain is E3 UFM1-protein ligase 1 homolog from Drosophila grimshawi (Hawaiian fruit fly).